Reading from the N-terminus, the 114-residue chain is Nuclear transition protein 2 (114 aa).

The segment at 1-114 is disordered; it reads MDTKMQSLPT…KRRSSGRRYK (114 aa). H12, H14, H16, H24, C29, C31, C35, and C38 together coordinate Zn(2+). The span at 16-25 shows a compositional bias: low complexity; sequence HSSSRPQSHT. The short motif at 87 to 95 is the Nuclear localization signal element; the sequence is GKVSKRKAV. A compositionally biased stretch (basic residues) spans 90-114; the sequence is SKRKAVRRRKRTHRAKRRSSGRRYK. Phosphothreonine; by PKA is present on T101. Position 109 is a phosphoserine; by PKA (S109).

Belongs to the nuclear transition protein 2 family. Testis.

Its subcellular location is the nucleus. The protein resides in the nucleolus. The protein localises to the chromosome. Its function is as follows. Plays a key role in the replacement of histones to protamine in the elongating spermatids of mammals. In condensing spermatids, loaded onto the nucleosomes, where it promotes the recruitment and processing of protamines, which are responsible for histone eviction. The sequence is that of Nuclear transition protein 2 (Tnp2) from Rattus norvegicus (Rat).